A 173-amino-acid chain; its full sequence is ATP synthase subunit d, mitochondrial (173 aa).

Residues 1 to 23 (MAARSAALKIDWVKVTSSLGLRG) constitute a mitochondrion transit peptide.

It belongs to the ATPase d subunit family. F-type ATPases have 2 components, CF(1) - the catalytic core - and CF(0) - the membrane proton channel. In yeast, the dimeric form of ATP synthase consists of 17 polypeptides: alpha, beta, gamma, delta, epsilon, 4 (B), 5 (OSCP), 6 (A), 8, 9 (C), d, E (Tim11), f, g, h, i/j and k.

The protein localises to the mitochondrion inner membrane. In terms of biological role, mitochondrial membrane ATP synthase (F(1)F(0) ATP synthase or Complex V) produces ATP from ADP in the presence of a proton gradient across the membrane which is generated by electron transport complexes of the respiratory chain. F-type ATPases consist of two structural domains, F(1) - containing the extramembraneous catalytic core, and F(0) - containing the membrane proton channel, linked together by a central stalk and a peripheral stalk. During catalysis, ATP synthesis in the catalytic domain of F(1) is coupled via a rotary mechanism of the central stalk subunits to proton translocation. Part of the complex F(0) domain and the peripheric stalk, which acts as a stator to hold the catalytic alpha(3)beta(3) subcomplex and subunit a/ATP6 static relative to the rotary elements. The sequence is that of ATP synthase subunit d, mitochondrial (atp7) from Aspergillus terreus (strain NIH 2624 / FGSC A1156).